A 479-amino-acid polypeptide reads, in one-letter code: Poly(A) polymerase catalytic subunit (479 aa).

Residues Asp202 and Asp204 contribute to the active site. The Ca(2+) site is built by Asp202, Asp204, and Asp253.

This sequence belongs to the poxviridae poly(A) polymerase catalytic subunit family. As to quaternary structure, heterodimer of a large (catalytic) subunit and a small (regulatory) subunit.

The catalysed reaction is RNA(n) + ATP = RNA(n)-3'-adenine ribonucleotide + diphosphate. Its function is as follows. Polymerase that creates the 3'-poly(A) tail of mRNA's. The protein is Poly(A) polymerase catalytic subunit (OPG063) of Homo sapiens (Human).